The primary structure comprises 157 residues: MPRRRVVATREILPDPKFGSQTIAKFINHVMVDGKKSTAERIVYGALEQVAEKRNIEDPVAFFEEVLENVRPMVEVKARRVGGATYQVPMEVRPSRRTALAMRWLADAASKRSEKSMAHRLAGELGDASEGKGSAVKKRDEVHRMADANKAFSHYRF.

Belongs to the universal ribosomal protein uS7 family. In terms of assembly, part of the 30S ribosomal subunit. Contacts proteins S9 and S11.

One of the primary rRNA binding proteins, it binds directly to 16S rRNA where it nucleates assembly of the head domain of the 30S subunit. Is located at the subunit interface close to the decoding center, probably blocks exit of the E-site tRNA. This is Small ribosomal subunit protein uS7 from Psychrobacter sp. (strain PRwf-1).